The chain runs to 70 residues: Antimicrobial peptide VpCT1 (70 aa).

The signal sequence occupies residues 1-23 (MKNQFAVLLVALVLLQLFSQSEA). Leu-36 is modified (leucine amide). Residues 37–70 (GKRGLRNFDLEQMDDTYEPELSEADLRYLQDLLR) constitute a propeptide that is removed on maturation.

The protein belongs to the non-disulfide-bridged peptide (NDBP) superfamily. Short antimicrobial peptide (group 4) family. As to expression, expressed by the venom gland.

The protein localises to the secreted. The protein resides in the target cell membrane. Antimicrobial peptide with potent activity against bacteria S.aureus (MIC=4.7 uM) and E.coli (MIC=31.5 uM), and pathogenic yeasts C.albicans (MIC=25 uM) and C.glabrata (MIC=12.5 uM). Is not very effective against P.aeruginosa (MIC=150 and &gt;300 uM). Also provokes moderate hemolysis on human erythrocytes (HC(50)=10.5 uM). This chain is Antimicrobial peptide VpCT1, found in Mesomexovis punctatus (Scorpion).